A 320-amino-acid chain; its full sequence is Bifunctional protein FolD 2 (320 aa).

Residues 173 to 175 and Ile-242 each bind NADP(+); that span reads GRS.

This sequence belongs to the tetrahydrofolate dehydrogenase/cyclohydrolase family. In terms of assembly, homodimer.

It catalyses the reaction (6R)-5,10-methylene-5,6,7,8-tetrahydrofolate + NADP(+) = (6R)-5,10-methenyltetrahydrofolate + NADPH. The catalysed reaction is (6R)-5,10-methenyltetrahydrofolate + H2O = (6R)-10-formyltetrahydrofolate + H(+). The protein operates within one-carbon metabolism; tetrahydrofolate interconversion. Functionally, catalyzes the oxidation of 5,10-methylenetetrahydrofolate to 5,10-methenyltetrahydrofolate and then the hydrolysis of 5,10-methenyltetrahydrofolate to 10-formyltetrahydrofolate. The chain is Bifunctional protein FolD 2 from Rubrobacter xylanophilus (strain DSM 9941 / JCM 11954 / NBRC 16129 / PRD-1).